The chain runs to 97 residues: MAPDLDQRIETYYVRVRGTVQGVGFRHATVRQAHALGIKGWVANLDDGSVEAMLQGSANQVDRMLSWLRHGPPAARVTEVSGEERSTEKRYERFEQH.

An Acylphosphatase-like domain is found at 11-97 (TYYVRVRGTV…EKRYERFEQH (87 aa)). Catalysis depends on residues R26 and N44. The segment at 76–97 (RVTEVSGEERSTEKRYERFEQH) is disordered. The segment covering 82-97 (GEERSTEKRYERFEQH) has biased composition (basic and acidic residues).

Belongs to the acylphosphatase family.

It carries out the reaction an acyl phosphate + H2O = a carboxylate + phosphate + H(+). The polypeptide is Acylphosphatase (acyP) (Paraburkholderia xenovorans (strain LB400)).